The primary structure comprises 96 residues: Co-chaperonin GroES (96 aa).

This sequence belongs to the GroES chaperonin family. Heptamer of 7 subunits arranged in a ring. Interacts with the chaperonin GroEL.

The protein localises to the cytoplasm. Functionally, together with the chaperonin GroEL, plays an essential role in assisting protein folding. The GroEL-GroES system forms a nano-cage that allows encapsulation of the non-native substrate proteins and provides a physical environment optimized to promote and accelerate protein folding. GroES binds to the apical surface of the GroEL ring, thereby capping the opening of the GroEL channel. This Tremblaya princeps protein is Co-chaperonin GroES.